The following is a 517-amino-acid chain: Retrotransposon-like protein 1 (517 aa).

Disordered stretches follow at residues 1–29 and 142–161; these read MEVNEGQDTEGGSSRAQTLTPPPNPQQQL and EEERDKRKKEEQFREADARS.

The polypeptide is Retrotransposon-like protein 1 (retr-1) (Caenorhabditis elegans).